A 126-amino-acid chain; its full sequence is Glycine cleavage system H protein (126 aa).

One can recognise a Lipoyl-binding domain in the interval 21 to 103 (TVTIGISEHA…YEGGWIVKVK (83 aa)). At lysine 62 the chain carries N6-lipoyllysine.

It belongs to the GcvH family. The glycine cleavage system is composed of four proteins: P, T, L and H. (R)-lipoate is required as a cofactor.

The glycine cleavage system catalyzes the degradation of glycine. The H protein shuttles the methylamine group of glycine from the P protein to the T protein. This chain is Glycine cleavage system H protein, found in Vibrio vulnificus (strain CMCP6).